The sequence spans 401 residues: Riboflavin biosynthesis protein RibBA (401 aa).

Positions 1–203 are DHBP synthase; it reads MTDFQFSKVE…IQQLQEYRRK (203 aa). Residues 30-31, aspartate 35, 142-146, and glutamate 166 contribute to the D-ribulose 5-phosphate site; these read RE and RNGHT. A Mg(2+)-binding site is contributed by glutamate 31. Histidine 145 serves as a coordination point for Mg(2+). Residues 204–401 are GTP cyclohydrolase II; sequence HDSLVKQISV…QIKMGHMFNF (198 aa). Residue 254–258 coordinates GTP; that stretch reads RIHSE. Positions 259, 270, and 272 each coordinate Zn(2+). Residues glutamine 275, 297-299, and threonine 319 contribute to the GTP site; that span reads EGR. Aspartate 331 serves as the catalytic Proton acceptor; for GTP cyclohydrolase activity. Arginine 333 (nucleophile; for GTP cyclohydrolase activity) is an active-site residue. The GTP site is built by threonine 354 and lysine 359.

This sequence in the N-terminal section; belongs to the DHBP synthase family. The protein in the C-terminal section; belongs to the GTP cyclohydrolase II family. It depends on Mg(2+) as a cofactor. The cofactor is Mn(2+). Zn(2+) is required as a cofactor.

It carries out the reaction D-ribulose 5-phosphate = (2S)-2-hydroxy-3-oxobutyl phosphate + formate + H(+). The catalysed reaction is GTP + 4 H2O = 2,5-diamino-6-hydroxy-4-(5-phosphoribosylamino)-pyrimidine + formate + 2 phosphate + 3 H(+). Its pathway is cofactor biosynthesis; riboflavin biosynthesis; 2-hydroxy-3-oxobutyl phosphate from D-ribulose 5-phosphate: step 1/1. The protein operates within cofactor biosynthesis; riboflavin biosynthesis; 5-amino-6-(D-ribitylamino)uracil from GTP: step 1/4. Functionally, catalyzes the conversion of D-ribulose 5-phosphate to formate and 3,4-dihydroxy-2-butanone 4-phosphate. In terms of biological role, catalyzes the conversion of GTP to 2,5-diamino-6-ribosylamino-4(3H)-pyrimidinone 5'-phosphate (DARP), formate and pyrophosphate. This is Riboflavin biosynthesis protein RibBA from Actinobacillus pleuropneumoniae serotype 5b (strain L20).